The primary structure comprises 209 residues: Uracil phosphoribosyltransferase (209 aa).

5-phospho-alpha-D-ribose 1-diphosphate-binding positions include Arg79, Arg104, and 131-139; that span reads DPMLATGGS. Uracil-binding positions include Ile194 and 199–201; that span reads GDA. Asp200 is a binding site for 5-phospho-alpha-D-ribose 1-diphosphate.

The protein belongs to the UPRTase family. It depends on Mg(2+) as a cofactor.

It catalyses the reaction UMP + diphosphate = 5-phospho-alpha-D-ribose 1-diphosphate + uracil. Its pathway is pyrimidine metabolism; UMP biosynthesis via salvage pathway; UMP from uracil: step 1/1. With respect to regulation, allosterically activated by GTP. In terms of biological role, catalyzes the conversion of uracil and 5-phospho-alpha-D-ribose 1-diphosphate (PRPP) to UMP and diphosphate. The sequence is that of Uracil phosphoribosyltransferase from Exiguobacterium sibiricum (strain DSM 17290 / CCUG 55495 / CIP 109462 / JCM 13490 / 255-15).